Reading from the N-terminus, the 159-residue chain is Ribosomal RNA large subunit methyltransferase H (159 aa).

Residues Leu76, Gly108, and 127 to 132 (FSKMTF) contribute to the S-adenosyl-L-methionine site.

This sequence belongs to the RNA methyltransferase RlmH family. In terms of assembly, homodimer.

It localises to the cytoplasm. The enzyme catalyses pseudouridine(1915) in 23S rRNA + S-adenosyl-L-methionine = N(3)-methylpseudouridine(1915) in 23S rRNA + S-adenosyl-L-homocysteine + H(+). In terms of biological role, specifically methylates the pseudouridine at position 1915 (m3Psi1915) in 23S rRNA. The protein is Ribosomal RNA large subunit methyltransferase H of Lachnoclostridium phytofermentans (strain ATCC 700394 / DSM 18823 / ISDg) (Clostridium phytofermentans).